The chain runs to 702 residues: Ribosomal RNA large subunit methyltransferase K/L (702 aa).

Residues 43–154 (LIYQSLMWSR…KETASIALDL (112 aa)) enclose the THUMP domain.

It belongs to the methyltransferase superfamily. RlmKL family.

It localises to the cytoplasm. It catalyses the reaction guanosine(2445) in 23S rRNA + S-adenosyl-L-methionine = N(2)-methylguanosine(2445) in 23S rRNA + S-adenosyl-L-homocysteine + H(+). The catalysed reaction is guanosine(2069) in 23S rRNA + S-adenosyl-L-methionine = N(2)-methylguanosine(2069) in 23S rRNA + S-adenosyl-L-homocysteine + H(+). Specifically methylates the guanine in position 2445 (m2G2445) and the guanine in position 2069 (m7G2069) of 23S rRNA. This chain is Ribosomal RNA large subunit methyltransferase K/L, found in Salmonella schwarzengrund (strain CVM19633).